A 160-amino-acid chain; its full sequence is Deoxyuridine 5'-triphosphate nucleotidohydrolase (160 aa).

Substrate contacts are provided by residues 79 to 81 (RSG), Asn92, 96 to 98 (TVD), and Lys106.

Belongs to the dUTPase family. It depends on Mg(2+) as a cofactor.

The enzyme catalyses dUTP + H2O = dUMP + diphosphate + H(+). The protein operates within pyrimidine metabolism; dUMP biosynthesis; dUMP from dCTP (dUTP route): step 2/2. This enzyme is involved in nucleotide metabolism: it produces dUMP, the immediate precursor of thymidine nucleotides and it decreases the intracellular concentration of dUTP so that uracil cannot be incorporated into DNA. The sequence is that of Deoxyuridine 5'-triphosphate nucleotidohydrolase from Sinorhizobium medicae (strain WSM419) (Ensifer medicae).